A 272-amino-acid polypeptide reads, in one-letter code: Phosphate import ATP-binding protein PstB (272 aa).

One can recognise an ABC transporter domain in the interval 26–267 (LEIRNLDLSY…PRKRKTEDYI (242 aa)). 58–65 (GPSGCGKS) contributes to the ATP binding site.

Belongs to the ABC transporter superfamily. Phosphate importer (TC 3.A.1.7) family. The complex is composed of two ATP-binding proteins (PstB), two transmembrane proteins (PstC and PstA) and a solute-binding protein (PstS).

The protein localises to the cell inner membrane. It catalyses the reaction phosphate(out) + ATP + H2O = ADP + 2 phosphate(in) + H(+). Part of the ABC transporter complex PstSACB involved in phosphate import. Responsible for energy coupling to the transport system. The polypeptide is Phosphate import ATP-binding protein PstB (Shewanella denitrificans (strain OS217 / ATCC BAA-1090 / DSM 15013)).